Consider the following 148-residue polypeptide: Calmodulin-related protein 97A (148 aa).

4 EF-hand domains span residues 7-42 (EQIA…LGQN), 43-78 (PTEA…QMRE), 80-115 (DTEE…LGEK), and 116-148 (VTDE…ISQK). Residues D20, T24, K26, E31, N58, N60, Q62, E67, D93, D95, D97, E104, D129, D131, D133, M135, and E140 each contribute to the Ca(2+) site.

Belongs to the calmodulin family.

In terms of biological role, may be involved in calcium-mediated signal transduction. The protein is Calmodulin-related protein 97A (Acam) of Drosophila melanogaster (Fruit fly).